Reading from the N-terminus, the 159-residue chain is NAD(P)H-quinone oxidoreductase subunit J, chloroplastic (159 aa).

Belongs to the complex I 30 kDa subunit family. In terms of assembly, NDH is composed of at least 16 different subunits, 5 of which are encoded in the nucleus.

The protein resides in the plastid. The protein localises to the chloroplast thylakoid membrane. It carries out the reaction a plastoquinone + NADH + (n+1) H(+)(in) = a plastoquinol + NAD(+) + n H(+)(out). The catalysed reaction is a plastoquinone + NADPH + (n+1) H(+)(in) = a plastoquinol + NADP(+) + n H(+)(out). NDH shuttles electrons from NAD(P)H:plastoquinone, via FMN and iron-sulfur (Fe-S) centers, to quinones in the photosynthetic chain and possibly in a chloroplast respiratory chain. The immediate electron acceptor for the enzyme in this species is believed to be plastoquinone. Couples the redox reaction to proton translocation, and thus conserves the redox energy in a proton gradient. The chain is NAD(P)H-quinone oxidoreductase subunit J, chloroplastic from Brachypodium distachyon (Purple false brome).